The sequence spans 233 residues: Type IV secretion system protein PtlE homolog (233 aa).

Residues 42-62 traverse the membrane as a helical segment; the sequence is VAWAALAVTALSLIAIATMLP.

The protein belongs to the virB8 family.

Its subcellular location is the cell inner membrane. This chain is Type IV secretion system protein PtlE homolog (ptlE), found in Bordetella parapertussis (strain 12822 / ATCC BAA-587 / NCTC 13253).